The primary structure comprises 770 residues: Semaphorin-4F (770 aa).

The N-terminal stretch at 1–34 (MPASAARPRPGPGQPTASPFPLLLLAVLSGPVSG) is a signal peptide. The Extracellular segment spans residues 35-659 (RVPRSVPRTS…RDAPSRAHTV (625 aa)). A Sema domain is found at 42–510 (RTSLPISEAD…SRTEVTQVNT (469 aa)). Residue Asn-64 is glycosylated (N-linked (GlcNAc...) asparagine). The cysteines at positions 112 and 122 are disulfide-linked. N-linked (GlcNAc...) asparagine glycosylation occurs at Asn-133. 3 disulfides stabilise this stretch: Cys-140–Cys-149, Cys-273–Cys-384, and Cys-297–Cys-343. A glycan (N-linked (GlcNAc...) asparagine) is linked at Asn-509. The region spanning 512–563 (NCGRLQSCSECILAQDPVCAWSFRLDECVAHAGEHRGLVQDIESADVSSLCP) is the PSI domain. Disulfide bonds link Cys-513–Cys-530, Cys-522–Cys-539, and Cys-587–Cys-628. One can recognise an Ig-like C2-type domain in the interval 580 to 635 (AAHVVLPCSPSSAWASCVWHQPSGVTALTPRRDGLEVVVTPGAMGAYACECQEGGA). The helical transmembrane segment at 660-680 (GAGLAGFFLGILAASLTLILI) threads the bilayer. Topologically, residues 681–770 (GRRQQRRRQR…PLATCDETSI (90 aa)) are cytoplasmic. The tract at residues 696-725 (DKVGLDLGAPPSGTTSYSQDPPSPSPEDER) is disordered. Phosphoserine occurs at positions 718 and 720. Residues 768-770 (TSI) carry the PDZ-binding motif.

The protein belongs to the semaphorin family. In terms of assembly, interacts (via PDZ-binding motif) with DLG4/SAP90 (via PDZ domain 2); this interaction may promote translocation of DLG4/SAP90 to the membrane.

It localises to the cell membrane. It is found in the postsynaptic density. The protein resides in the perikaryon. Its subcellular location is the cell projection. The protein localises to the dendrite. Functionally, probable cell surface receptor that regulates oligodendroglial precursor cell migration. Might also regulate differentiation of oligodendroglial precursor cells. Has growth cone collapse activity against retinal ganglion-cell axons. This Homo sapiens (Human) protein is Semaphorin-4F (SEMA4F).